The sequence spans 184 residues: Protein PLANT CADMIUM RESISTANCE 5 (184 aa).

Residues 1–26 (MGRPVGQTNQAQPSVQHTASPSNKVS) are compositionally biased toward polar residues. A disordered region spans residues 1–33 (MGRPVGQTNQAQPSVQHTASPSNKVSHNGGIGK). Residues 94-114 (AGLLYGALFFTGASFVYSYMF) form a helical membrane-spanning segment.

It belongs to the cornifelin family.

It localises to the membrane. Functionally, may be involved in heavy metals transport. In Arabidopsis thaliana (Mouse-ear cress), this protein is Protein PLANT CADMIUM RESISTANCE 5 (PCR5).